The sequence spans 181 residues: ATP synthase subunit delta (181 aa).

The protein belongs to the ATPase delta chain family. In terms of assembly, F-type ATPases have 2 components, F(1) - the catalytic core - and F(0) - the membrane proton channel. F(1) has five subunits: alpha(3), beta(3), gamma(1), delta(1), epsilon(1). F(0) has three main subunits: a(1), b(2) and c(10-14). The alpha and beta chains form an alternating ring which encloses part of the gamma chain. F(1) is attached to F(0) by a central stalk formed by the gamma and epsilon chains, while a peripheral stalk is formed by the delta and b chains.

The protein resides in the cell inner membrane. F(1)F(0) ATP synthase produces ATP from ADP in the presence of a proton or sodium gradient. F-type ATPases consist of two structural domains, F(1) containing the extramembraneous catalytic core and F(0) containing the membrane proton channel, linked together by a central stalk and a peripheral stalk. During catalysis, ATP synthesis in the catalytic domain of F(1) is coupled via a rotary mechanism of the central stalk subunits to proton translocation. Its function is as follows. This protein is part of the stalk that links CF(0) to CF(1). It either transmits conformational changes from CF(0) to CF(1) or is implicated in proton conduction. The sequence is that of ATP synthase subunit delta from Orientia tsutsugamushi (strain Boryong) (Rickettsia tsutsugamushi).